The chain runs to 180 residues: Stathmin-3 (180 aa).

Residues Cys22 and Cys24 are each lipidated (S-palmitoyl cysteine). The region spanning 38–180 is the SLD domain; that stretch reads GDMEVKQLDK…NKEQREEMSG (143 aa). Phosphoserine is present on residues Ser50, Ser60, Ser65, Ser68, Ser72, Ser73, and Ser81. The tract at residues 58-81 is disordered; it reads LKSPSDLSPESPVLSSPPKRKDAS. Residues 60 to 74 are compositionally biased toward low complexity; it reads SPSDLSPESPVLSSP. Residues 75–179 are a coiled coil; it reads PKRKDASLEE…RNKEQREEMS (105 aa).

Belongs to the stathmin family. As to quaternary structure, interacts with STAT3. Interacts with CLU (secreted form); this interaction may act as an important modulator during neuronal differentiation. In terms of processing, N-terminal palmitoylation promotes specific anchoring to the cytosolic leaflet of Golgi membranes and subsequent vesicular trafficking along dendrites and axons. Neuronal Stathmins are substrates for palmitoyltransferases ZDHHC3, ZDHHC7 and ZDHHC15. As to expression, neuron specific.

It localises to the golgi apparatus. The protein resides in the cell projection. Its subcellular location is the growth cone. The protein localises to the axon. It is found in the cytoplasm. It localises to the cytosol. In terms of biological role, exhibits microtubule-destabilizing activity, which is antagonized by STAT3. The protein is Stathmin-3 (Stmn3) of Rattus norvegicus (Rat).